Consider the following 270-residue polypeptide: NAD kinase (270 aa).

Residue D61 is the Proton acceptor of the active site. NAD(+) is bound by residues 61 to 62 (DG), 133 to 134 (NE), R144, R163, D165, and 176 to 181 (TAYNLS).

This sequence belongs to the NAD kinase family. A divalent metal cation is required as a cofactor.

The protein resides in the cytoplasm. It catalyses the reaction NAD(+) + ATP = ADP + NADP(+) + H(+). Involved in the regulation of the intracellular balance of NAD and NADP, and is a key enzyme in the biosynthesis of NADP. Catalyzes specifically the phosphorylation on 2'-hydroxyl of the adenosine moiety of NAD to yield NADP. This chain is NAD kinase, found in Natronomonas pharaonis (strain ATCC 35678 / DSM 2160 / CIP 103997 / JCM 8858 / NBRC 14720 / NCIMB 2260 / Gabara) (Halobacterium pharaonis).